The sequence spans 411 residues: NADH-quinone oxidoreductase subunit D (411 aa).

This sequence belongs to the complex I 49 kDa subunit family. As to quaternary structure, NDH-1 is composed of 14 different subunits. Subunits NuoB, C, D, E, F, and G constitute the peripheral sector of the complex.

It is found in the cell inner membrane. It carries out the reaction a quinone + NADH + 5 H(+)(in) = a quinol + NAD(+) + 4 H(+)(out). NDH-1 shuttles electrons from NADH, via FMN and iron-sulfur (Fe-S) centers, to quinones in the respiratory chain. The immediate electron acceptor for the enzyme in this species is believed to be ubiquinone. Couples the redox reaction to proton translocation (for every two electrons transferred, four hydrogen ions are translocated across the cytoplasmic membrane), and thus conserves the redox energy in a proton gradient. In Phenylobacterium zucineum (strain HLK1), this protein is NADH-quinone oxidoreductase subunit D.